A 124-amino-acid chain; its full sequence is Glycine cleavage system H protein (124 aa).

One can recognise a Lipoyl-binding domain in the interval 24–106 (TYTMGITDHA…YDDGWLVKFK (83 aa)). Position 65 is an N6-lipoyllysine (Lys65).

The protein belongs to the GcvH family. In terms of assembly, the glycine cleavage system is composed of four proteins: P, T, L and H. The cofactor is (R)-lipoate.

Functionally, the glycine cleavage system catalyzes the degradation of glycine. The H protein shuttles the methylamine group of glycine from the P protein to the T protein. The protein is Glycine cleavage system H protein of Ruthia magnifica subsp. Calyptogena magnifica.